We begin with the raw amino-acid sequence, 493 residues long: 3-octaprenyl-4-hydroxybenzoate carboxy-lyase (493 aa).

Asn172 is a Mn(2+) binding site. Prenylated FMN contacts are provided by residues 175–177, 189–191, and 194–195; these read IYR, RWL, and RG. Glu238 provides a ligand contact to Mn(2+). Asp287 acts as the Proton donor in catalysis.

It belongs to the UbiD family. In terms of assembly, homohexamer. Requires prenylated FMN as cofactor. The cofactor is Mn(2+).

The protein localises to the cell membrane. The catalysed reaction is a 4-hydroxy-3-(all-trans-polyprenyl)benzoate + H(+) = a 2-(all-trans-polyprenyl)phenol + CO2. It functions in the pathway cofactor biosynthesis; ubiquinone biosynthesis. In terms of biological role, catalyzes the decarboxylation of 3-octaprenyl-4-hydroxy benzoate to 2-octaprenylphenol, an intermediate step in ubiquinone biosynthesis. The chain is 3-octaprenyl-4-hydroxybenzoate carboxy-lyase from Shewanella amazonensis (strain ATCC BAA-1098 / SB2B).